The following is a 337-amino-acid chain: DNA-directed RNA polymerase subunit alpha (337 aa).

The tract at residues 1–233 is alpha N-terminal domain (alpha-NTD); that stretch reads MIQKNWQELI…DQLSLFVNFE (233 aa). The interval 249–337 is alpha C-terminal domain (alpha-CTD); the sequence is FNPALLKKVD…DLAKRYEDQY (89 aa).

The protein belongs to the RNA polymerase alpha chain family. In terms of assembly, homodimer. The RNAP catalytic core consists of 2 alpha, 1 beta, 1 beta' and 1 omega subunit. When a sigma factor is associated with the core the holoenzyme is formed, which can initiate transcription.

The enzyme catalyses RNA(n) + a ribonucleoside 5'-triphosphate = RNA(n+1) + diphosphate. Functionally, DNA-dependent RNA polymerase catalyzes the transcription of DNA into RNA using the four ribonucleoside triphosphates as substrates. The protein is DNA-directed RNA polymerase subunit alpha of Bartonella quintana (strain Toulouse) (Rochalimaea quintana).